We begin with the raw amino-acid sequence, 142 residues long: Large ribosomal subunit protein uL13 (142 aa).

The protein belongs to the universal ribosomal protein uL13 family. As to quaternary structure, part of the 50S ribosomal subunit.

In terms of biological role, this protein is one of the early assembly proteins of the 50S ribosomal subunit, although it is not seen to bind rRNA by itself. It is important during the early stages of 50S assembly. This is Large ribosomal subunit protein uL13 from Haemophilus influenzae (strain 86-028NP).